The chain runs to 2025 residues: E3 ubiquitin-protein ligase TTC3 (2025 aa).

An interaction with POLG region spans residues 1-230 (MDNFAEGDFT…TQSCMDCIEE (230 aa)). 2 TPR repeats span residues 231-264 (GELM…RPEN) and 266-298 (LLYG…KNTW). The residue at position 378 (serine 378) is a Phosphoserine; by PKB/AKT2. The segment at 423-458 (DCHPEFSPPSSQPPKHKGKQKSRNNESEKFSSSSPL) is disordered. TPR repeat units follow at residues 536-572 (VLVV…YPSE) and 576-609 (CLAY…IYRL). The interval 786–805 (ERMEEDLRESNPPKNEEQKE) is disordered. The span at 793 to 805 (RESNPPKNEEQKE) shows a compositional bias: basic and acidic residues. A Phosphoserine modification is found at serine 1009. 4 disordered regions span residues 1012 to 1068 (APFS…GPFA), 1215 to 1295 (KPDV…SCNS), 1773 to 1842 (DPSV…SPKK), and 1894 to 1944 (ILDE…QKAE). Over residues 1019–1029 (VKNKSKKKKPK) the composition is skewed to basic residues. Polar residues predominate over residues 1038–1052 (SGTTSVTSNNEIITS). Phosphoserine is present on serine 1061. Positions 1894–1912 (ILDEQKKKKPNPGKDKRTY) are enriched in basic and acidic residues. The span at 1913 to 1928 (EPSSATPVTRSSQGSP) shows a compositional bias: polar residues. The RING-type zinc-finger motif lies at 1957–1997 (CEICHEVFKSKNVRVLKCGHKYHKGCFKQWLKGQSACPACQ). Residues 2004 to 2025 (EESPSGRGWPSQNQELPSCSSR) are disordered. Residues 2013–2025 (PSQNQELPSCSSR) show a composition bias toward polar residues.

Interacts (when phosphorylated on Ser-378) with AKT1, AKT2 and AKT3 (when phosphorylated). Interacts with CIT. Interacts with POLG. Interacts with HSP70. Interacts with SMURF2. Post-translationally, phosphorylation on Ser-378 by Akt is required for ubiquitin ligase activity. Proteolytically cleaved into differently sized N- and C-terminal fragments. Found in all tissues examined.

Its subcellular location is the nucleus. It localises to the cytoplasm. The protein localises to the golgi apparatus. It carries out the reaction S-ubiquitinyl-[E2 ubiquitin-conjugating enzyme]-L-cysteine + [acceptor protein]-L-lysine = [E2 ubiquitin-conjugating enzyme]-L-cysteine + N(6)-ubiquitinyl-[acceptor protein]-L-lysine.. Its pathway is protein modification; protein ubiquitination. Functionally, E3 ubiquitin-protein ligase which catalyzes the formation of 'Lys-48'-polyubiquitin chains. Mediates the ubiquitination and subsequent degradation of phosphorylated Akt (AKT1, AKT2 and AKT3) in the nucleus. Acts as a terminal regulator of Akt signaling after activation; its phosphorylation by Akt, which is a prerequisite for ubiquitin ligase activity, suggests the existence of a regulation mechanism required to control Akt levels after activation. Positively regulates TGFB1-induced epithelial-mesenchymal transition and myofibroblast differentiation by mediating the ubiquitination and subsequent degradation of SMURF2. Regulates neuronal differentiation by regulating actin remodeling and Golgi organization via a signaling cascade involving RHOA, CIT and ROCK. Inhibits cell proliferation. The protein is E3 ubiquitin-protein ligase TTC3 (TTC3) of Homo sapiens (Human).